Here is a 225-residue protein sequence, read N- to C-terminus: Imidazole glycerol phosphate synthase subunit HisH (225 aa).

The region spanning Thr3 to Pro225 is the Glutamine amidotransferase type-1 domain. Cys82 (nucleophile) is an active-site residue. Residues His205 and Glu207 contribute to the active site.

Heterodimer of HisH and HisF.

Its subcellular location is the cytoplasm. The enzyme catalyses 5-[(5-phospho-1-deoxy-D-ribulos-1-ylimino)methylamino]-1-(5-phospho-beta-D-ribosyl)imidazole-4-carboxamide + L-glutamine = D-erythro-1-(imidazol-4-yl)glycerol 3-phosphate + 5-amino-1-(5-phospho-beta-D-ribosyl)imidazole-4-carboxamide + L-glutamate + H(+). It catalyses the reaction L-glutamine + H2O = L-glutamate + NH4(+). The protein operates within amino-acid biosynthesis; L-histidine biosynthesis; L-histidine from 5-phospho-alpha-D-ribose 1-diphosphate: step 5/9. IGPS catalyzes the conversion of PRFAR and glutamine to IGP, AICAR and glutamate. The HisH subunit catalyzes the hydrolysis of glutamine to glutamate and ammonia as part of the synthesis of IGP and AICAR. The resulting ammonia molecule is channeled to the active site of HisF. The polypeptide is Imidazole glycerol phosphate synthase subunit HisH (Bordetella pertussis (strain Tohama I / ATCC BAA-589 / NCTC 13251)).